The sequence spans 162 residues: MADPSFDIVSKVDTQEIDNAVNQTAKEIKTRFDFRDTGASAALSGESILLQANSEDRVKAVLDVLQEKFVKRGISLKSLEHGEPRQSGKEYKLTVTVQQGIADEKAKAIAKKIRADGPKGVQAQIQGDQLRVTGKKRDDLQRVIQLLKAEDFDVPLQFVNYR.

Belongs to the YajQ family.

Functionally, nucleotide-binding protein. This Parafrankia sp. (strain EAN1pec) protein is Nucleotide-binding protein Franean1_6074.